We begin with the raw amino-acid sequence, 387 residues long: D(4) dopamine receptor (387 aa).

Residues Met-1–Ala-34 lie on the Extracellular side of the membrane. An N-linked (GlcNAc...) asparagine glycan is attached at Asn-3. The helical transmembrane segment at Leu-35 to Ala-57 threads the bilayer. At Ser-58–Asn-67 the chain is on the cytoplasmic side. A helical transmembrane segment spans residues Tyr-68–Tyr-90. Residue Asp-77 coordinates Na(+). Over Ser-91 to Asp-106 the chain is Extracellular. A disulfide bond links Cys-105 and Cys-180. A helical transmembrane segment spans residues Thr-107–Val-128. Ser-119 lines the Na(+) pocket. Residues Asp-129–Cys-146 are Cytoplasmic-facing. A helical transmembrane segment spans residues Gln-147–Asn-170. Residues Asp-171 to Asp-186 are Extracellular-facing. The helical transmembrane segment at Tyr-187–Trp-208 threads the bilayer. The Cytoplasmic portion of the chain corresponds to Ala-209–Arg-314. Disordered regions lie at residues Lys-224–Pro-247 and Ala-287–Thr-306. The chain crosses the membrane as a helical span at residues Val-315–Arg-337. Over Ala-338–Ser-346 the chain is Extracellular. Cys-340 and Cys-343 are joined by a disulfide. Residues Pro-347–Thr-369 form a helical membrane-spanning segment. Topologically, residues Ile-370–Cys-387 are cytoplasmic. Cys-387 carries S-palmitoyl cysteine lipidation.

Belongs to the G-protein coupled receptor 1 family. As to quaternary structure, forms homo- and heterooligomers with DRD2. D4.7 allele exhibits higher affinity for homodimers compared to DRD2 heterodimers, while alleles D42. and 4.4 have similar affinities for both. The interaction with DRD2 may modulate agonist-induced downstream signaling. Interacts with CLIC6. Interacts with GPRASP1. May interact with ADORA2A. Interacts with KLHL12. Palmitoylated. Palmitoylation of the C-terminal Cys is important for normal expression at the cell membrane. As to expression, detected in olfactory bulb, hypothalamus, olfactory tubercle, brainstem and striatum.

The protein resides in the cell membrane. Dopamine receptor responsible for neuronal signaling in the mesolimbic system of the brain, an area of the brain that regulates emotion and complex behavior. Activated by dopamine, but also by epinephrine and norepinephrine, and by numerous synthetic agonists and drugs. Agonist binding triggers signaling via G proteins that inhibit adenylyl cyclase. Modulates the circadian rhythm of contrast sensitivity by regulating the rhythmic expression of NPAS2 in the retinal ganglion cells. The sequence is that of D(4) dopamine receptor (Drd4) from Mus musculus (Mouse).